We begin with the raw amino-acid sequence, 180 residues long: Large ribosomal subunit protein uL5 (180 aa).

The protein belongs to the universal ribosomal protein uL5 family. In terms of assembly, part of the 50S ribosomal subunit; part of the 5S rRNA/L5/L18/L25 subcomplex. Contacts the 5S rRNA and the P site tRNA. Forms a bridge to the 30S subunit in the 70S ribosome.

In terms of biological role, this is one of the proteins that bind and probably mediate the attachment of the 5S RNA into the large ribosomal subunit, where it forms part of the central protuberance. In the 70S ribosome it contacts protein S13 of the 30S subunit (bridge B1b), connecting the 2 subunits; this bridge is implicated in subunit movement. Contacts the P site tRNA; the 5S rRNA and some of its associated proteins might help stabilize positioning of ribosome-bound tRNAs. This is Large ribosomal subunit protein uL5 from Chlamydia trachomatis serovar L2 (strain ATCC VR-902B / DSM 19102 / 434/Bu).